We begin with the raw amino-acid sequence, 469 residues long: Spermatogenesis-associated protein 21 (469 aa).

2 disordered regions span residues 1-76 (MDNR…AGTQ) and 99-157 (HRRA…MGAP). Residues 49–61 (EVRDIGERREPDR) show a composition bias toward basic and acidic residues. A compositionally biased stretch (low complexity) spans 62-73 (AQQQPQKPAVAA). The segment covering 105-132 (ARSQTAQKSPRTLTPVPTSAPSLPQTPA) has biased composition (polar residues). Pro residues predominate over residues 146–157 (APGPEPAPMGAP). A coiled-coil region spans residues 198-225 (EPEEQSLQKLYQNREKSEEQLTLKQEEA). The region spanning 255–290 (VTLAQVEDALMSADVNGDGRVDFKDFLAVMTDTRRF) is the EF-hand domain. Ca(2+) contacts are provided by D268, N270, D272, R274, and D279. The disordered stretch occupies residues 424-469 (YALDQCTPPGLDPDIRSPFFQSGSQGNREHNSDSRKWLSSVPARTH). The span at 450-459 (NREHNSDSRK) shows a compositional bias: basic and acidic residues.

Its function is as follows. Involved in the differentiation of haploid spermatids. This Homo sapiens (Human) protein is Spermatogenesis-associated protein 21 (SPATA21).